The chain runs to 496 residues: SRCTHLENRDFVTGTQGTTRVTLVLELGGCVTITAEGKPSMDVWLDAIYQESPAKTREYCLHAKLSETKVAARCPTMGPAVLTEERQIGTVCKRDQSDRGWGNHCGLFGKGSIVACVKAACEAKKKATGYVYDANKIVYTVKVEPHTGDYVAANETHKGRKTATFTVSSEKTILTLGEYGDVSLLCRVASGVDLAQTIILELDKTAEHLPTAWQVHRDWFNDLALPWKHDGNPHWNNAERLVEFGAPHAVKMDVYNLGDQTGVLLKALAGVPVAHIEGNKYHLKSGHVTCEVGLEKLKMKGLTYTMCDKSKFAWKRTPTDSGHDTVVMEVTFSGSKPCRIPVRAVAHGSPDVNVAMLITPNPTIENDGGGFIEMQLPPGDNIIYVGELSHQWFQTGSSIGRVFQTTRKGIERLTVIGEHAWDFGSAGGFFSSIGKAVHTVLGGAFNSIFGGVGFLPKLLMGVALAWLGLNTRNPTMSMSFLLAGGLVLAMTLGVGA.

The Extracellular segment spans residues 1–447; that stretch reads SRCTHLENRD…HTVLGGAFNS (447 aa). 6 cysteine pairs are disulfide-bonded: cysteine 3-cysteine 30, cysteine 60-cysteine 116, cysteine 60-cysteine 121, cysteine 74-cysteine 105, cysteine 92-cysteine 116, and cysteine 92-cysteine 121. A fusion peptide region spans residues 98-111; the sequence is DRGWGNHCGLFGKG. N-linked (GlcNAc...) asparagine; by host glycosylation is present at asparagine 154. Intrachain disulfides connect cysteine 186-cysteine 290 and cysteine 307-cysteine 338. Residues 448 to 468 traverse the membrane as a helical segment; that stretch reads IFGGVGFLPKLLMGVALAWLG. The Cytoplasmic portion of the chain corresponds to 469 to 479; sequence LNTRNPTMSMS. Residues 480 to 496 traverse the membrane as a helical segment; sequence FLLAGGLVLAMTLGVGA.

As to quaternary structure, homodimer; in the endoplasmic reticulum and Golgi. In terms of processing, N-glycosylated.

It localises to the virion membrane. It is found in the host endoplasmic reticulum membrane. Functionally, binds to host cell surface receptor and mediates fusion between viral and cellular membranes. Envelope protein is synthesized in the endoplasmic reticulum in the form of heterodimer with protein prM. They play a role in virion budding in the ER, and the newly formed immature particle is covered with 60 spikes composed of heterodimer between precursor prM and envelope protein E. The virion is transported to the Golgi apparatus where the low pH causes dissociation of PrM-E heterodimers and formation of E homodimers. prM-E cleavage is ineficient, and many virions are only partially matured. These uncleaved prM would play a role in immune evasion. This is Genome polyprotein from Bos taurus (Bovine).